Here is a 185-residue protein sequence, read N- to C-terminus: Ribosome-recycling factor (185 aa).

It belongs to the RRF family.

It localises to the cytoplasm. Functionally, responsible for the release of ribosomes from messenger RNA at the termination of protein biosynthesis. May increase the efficiency of translation by recycling ribosomes from one round of translation to another. This Thermomicrobium roseum (strain ATCC 27502 / DSM 5159 / P-2) protein is Ribosome-recycling factor.